The sequence spans 466 residues: MSALTGKHVLVLGLGESGLAMARWCALRGARLRVADSRQTPPGLDTLRADAPLAEIVVGNFGAEVLSGIDLVALSPGVDPRIGIAAEARHRGLPLTGEMSLLAQALDELGVRAQTRILAITGTNGKTTTTALTAALAQAAGLDAVAAGNISPAALDVLMDRLAQGAPLPECWVLELSSFQIETMHALDPEAATVLNVTDDHLDRYAGLDEYAATKAAIFEGRGVQVLNRDDARVAAMALPGRSLIRFGASAPAATDDYGLVEVAGAAWLVRGRERLLALADLPLAGRHNAANTLAALALCEGGLGIAPQRLTGAVVAFRGLPHRVELVAERSDGVRFYDDSKGTNVGATVAALDGMDCPVVLIAGGDGKGQDFSPLREAVVRRARAVVLIGRDAPRIESALQGSAVALEHAPDLDAAVVRASEQAQPGDAVLLSPACASLDMFRNYAHRAEVFIAAARRLPEVRAS.

Residue Gly122–Thr128 participates in ATP binding.

Belongs to the MurCDEF family.

The protein localises to the cytoplasm. The catalysed reaction is UDP-N-acetyl-alpha-D-muramoyl-L-alanine + D-glutamate + ATP = UDP-N-acetyl-alpha-D-muramoyl-L-alanyl-D-glutamate + ADP + phosphate + H(+). Its pathway is cell wall biogenesis; peptidoglycan biosynthesis. Its function is as follows. Cell wall formation. Catalyzes the addition of glutamate to the nucleotide precursor UDP-N-acetylmuramoyl-L-alanine (UMA). The chain is UDP-N-acetylmuramoylalanine--D-glutamate ligase from Aromatoleum aromaticum (strain DSM 19018 / LMG 30748 / EbN1) (Azoarcus sp. (strain EbN1)).